The following is a 34-amino-acid chain: Cytochrome c oxidase subunit 6B (34 aa).

This sequence belongs to the cytochrome c oxidase subunit 6B family. In terms of assembly, component of the cytochrome c oxidase (complex IV, CIV), a multisubunit enzyme composed of 14 subunits. The complex is composed of a catalytic core of 3 subunits MT-CO1, MT-CO2 and MT-CO3, encoded in the mitochondrial DNA, and 11 supernumerary subunits COX4I, COX5A, COX5B, COX6A, COX6B, COX6C, COX7A, COX7B, COX7C, COX8 and NDUFA4, which are encoded in the nuclear genome. The complex exists as a monomer or a dimer and forms supercomplexes (SCs) in the inner mitochondrial membrane with NADH-ubiquinone oxidoreductase (complex I, CI) and ubiquinol-cytochrome c oxidoreductase (cytochrome b-c1 complex, complex III, CIII), resulting in different assemblies (supercomplex SCI(1)III(2)IV(1) and megacomplex MCI(2)III(2)IV(2)). Post-translationally, the N-terminus is blocked.

The protein localises to the mitochondrion inner membrane. It participates in energy metabolism; oxidative phosphorylation. Its function is as follows. Component of the cytochrome c oxidase, the last enzyme in the mitochondrial electron transport chain which drives oxidative phosphorylation. The respiratory chain contains 3 multisubunit complexes succinate dehydrogenase (complex II, CII), ubiquinol-cytochrome c oxidoreductase (cytochrome b-c1 complex, complex III, CIII) and cytochrome c oxidase (complex IV, CIV), that cooperate to transfer electrons derived from NADH and succinate to molecular oxygen, creating an electrochemical gradient over the inner membrane that drives transmembrane transport and the ATP synthase. Cytochrome c oxidase is the component of the respiratory chain that catalyzes the reduction of oxygen to water. Electrons originating from reduced cytochrome c in the intermembrane space (IMS) are transferred via the dinuclear copper A center (CU(A)) of subunit 2 and heme A of subunit 1 to the active site in subunit 1, a binuclear center (BNC) formed by heme A3 and copper B (CU(B)). The BNC reduces molecular oxygen to 2 water molecules using 4 electrons from cytochrome c in the IMS and 4 protons from the mitochondrial matrix. The sequence is that of Cytochrome c oxidase subunit 6B from Thunnus obesus (Bigeye tuna).